Consider the following 299-residue polypeptide: MIESKRLRIAMQKSGRLSQESQALLKQCGVKINLQEQRLIAYAENMPIDILRVRDDDIPGLVFDGVVDLGIIGENVLEEEELTRQAAGETVNYKKLRRLDFGGCRLSIAIPQDEAYNGISDLKNARIATSYPNLLKRYMQQQGVDFKTCSLTGSVEVAPRAGLADAICDLVSSGATLEANGLKEVEIIYRSKSCLIQRAAELSPEKQALVDKLLTRIQGVQQAAESKYIMLHAPKEKLEEITALLPGVENPTILPLAHDNSKVAMHVVSQENLFWETMEQLKDAGASSILVLPIEKMMG.

It belongs to the ATP phosphoribosyltransferase family. Long subfamily. Mg(2+) serves as cofactor.

It localises to the cytoplasm. The enzyme catalyses 1-(5-phospho-beta-D-ribosyl)-ATP + diphosphate = 5-phospho-alpha-D-ribose 1-diphosphate + ATP. It participates in amino-acid biosynthesis; L-histidine biosynthesis; L-histidine from 5-phospho-alpha-D-ribose 1-diphosphate: step 1/9. Its activity is regulated as follows. Feedback inhibited by histidine. In terms of biological role, catalyzes the condensation of ATP and 5-phosphoribose 1-diphosphate to form N'-(5'-phosphoribosyl)-ATP (PR-ATP). Has a crucial role in the pathway because the rate of histidine biosynthesis seems to be controlled primarily by regulation of HisG enzymatic activity. In Pasteurella multocida (strain Pm70), this protein is ATP phosphoribosyltransferase (hisG).